Consider the following 196-residue polypeptide: Orotate phosphoribosyltransferase (196 aa).

117–125 (EDIVTTGLS) is a binding site for 5-phospho-alpha-D-ribose 1-diphosphate. Thr-121 and Arg-149 together coordinate orotate.

It belongs to the purine/pyrimidine phosphoribosyltransferase family. PyrE subfamily. As to quaternary structure, homodimer. Requires Mg(2+) as cofactor.

The catalysed reaction is orotidine 5'-phosphate + diphosphate = orotate + 5-phospho-alpha-D-ribose 1-diphosphate. Its pathway is pyrimidine metabolism; UMP biosynthesis via de novo pathway; UMP from orotate: step 1/2. In terms of biological role, catalyzes the transfer of a ribosyl phosphate group from 5-phosphoribose 1-diphosphate to orotate, leading to the formation of orotidine monophosphate (OMP). The chain is Orotate phosphoribosyltransferase from Methylorubrum extorquens (strain PA1) (Methylobacterium extorquens).